The primary structure comprises 215 residues: Orotidine 5'-phosphate decarboxylase (215 aa).

Substrate contacts are provided by residues aspartate 12, lysine 34, 60–69 (DFKVADIPNT), serine 117, 170–180 (PGVGAQGGSAA), glycine 193, and arginine 194. Residue lysine 62 is the Proton donor of the active site.

Belongs to the OMP decarboxylase family. Type 1 subfamily. As to quaternary structure, homodimer.

It carries out the reaction orotidine 5'-phosphate + H(+) = UMP + CO2. It participates in pyrimidine metabolism; UMP biosynthesis via de novo pathway; UMP from orotate: step 2/2. Its function is as follows. Catalyzes the decarboxylation of orotidine 5'-monophosphate (OMP) to uridine 5'-monophosphate (UMP). The protein is Orotidine 5'-phosphate decarboxylase of Methanococcoides burtonii (strain DSM 6242 / NBRC 107633 / OCM 468 / ACE-M).